Here is a 442-residue protein sequence, read N- to C-terminus: Tryptophan synthase beta chain 2 (442 aa).

Lysine 122 is modified (N6-(pyridoxal phosphate)lysine).

The protein belongs to the TrpB family. As to quaternary structure, tetramer of two alpha and two beta chains. Pyridoxal 5'-phosphate is required as a cofactor.

It catalyses the reaction (1S,2R)-1-C-(indol-3-yl)glycerol 3-phosphate + L-serine = D-glyceraldehyde 3-phosphate + L-tryptophan + H2O. Its pathway is amino-acid biosynthesis; L-tryptophan biosynthesis; L-tryptophan from chorismate: step 5/5. The beta subunit is responsible for the synthesis of L-tryptophan from indole and L-serine. The sequence is that of Tryptophan synthase beta chain 2 (trpB2) from Methanosarcina acetivorans (strain ATCC 35395 / DSM 2834 / JCM 12185 / C2A).